A 405-amino-acid chain; its full sequence is Prenyltransferase phqA (405 aa).

3 residues coordinate dimethylallyl diphosphate: Y195, K262, and Q332.

The protein belongs to the tryptophan dimethylallyltransferase family.

Its pathway is alkaloid biosynthesis. Prenyltransferase; part of the gene cluster that mediates the biosynthesis of paraherquamide, a fungal indole alkaloid that belongs to a family of natural products containing a characteristic bicyclo[2.2.2]diazaoctane core. The first steps in the biosynthesis of paraherquamide is the production of the beta-methyl-proline precursor from L-isoleucine. They require oxidation of a terminally hydroxylated L-isoleucine to the corresponding aldehyde by enzymes which have still to be identified. Spontaneous cyclization and dehydration would yield the 4-methyl pyrolline-5-carboxylic acid, which is then reduced by the pyrroline-5-carboxylate reductase phqD leading to the beta-methyl-proline precursor. The next step of paraherquamide biosynthesis involves coupling of beta-methyl-proline and L-tryptophan by the bimodular NRPS phqB, to produce a monooxopiperazine intermediate. The reductase (R) domain of phqB utilizes NADPH for hydride transfer to reduce the thioester bond of the T domain-tethered linear dipeptide to a hemithioaminal intermediate, which spontaneously cleaves the C-S bond to release the aldehyde product. This compound undergoes spontaneous cyclization and dehydration to give a dienamine which is reverse prenylated at C-2 by the reverse prenyltransferase phqJ. The other prenyltransferase present in the cluster, phqI may be a redundant gene in the pathway. During biosynthetic assembly, the key step to produce the polycyclic core is catalyzed by the bifunctional reductase and intramolecular [4+2] Diels-Alderase, phqE, resulting in formation of the [2.2.2] diazaoctane intermediate preparaherquamide. Following formation of preparaherquamide, an indole 2,3-epoxidation-initiated pinacol-like rearrangement is catalyzed by the phqK FAD-dependent monooxygenase. The prenyltransferase phqA, the cytochrome P450 monooxygenase phqL, and the FAD-linked oxidoreductase phqH (or the cytochrome P450 monooxygenase phqM), are proposed to be involved in the formation of the pyran ring. The FAD-dependent monooxygenase phqK is likely responsible for generation of the spiro-oxindole, and the N-methylation is likely mediated by the phqN methyltransferase leading to the isolable natural product paraherquamide F. However, the order of these biosynthetic steps has still to be determined. In late-stage paraherquamide biosynthesis, the third P450 monooxygenase, phqO, is probably responsible for the C-14 hydroxylation, transforming paraherquamide F to paraherquamide G, and paraherquamide E to the final product paraherquamide A. The expansion from the 6-membered ring pyran (in paraherquamides F and G) to the 7-membered dioxepin ring (in paraherquamides A and E) represents a poorly understood but intriguing process that probably involves the 2-oxoglutarate-dependent dioxygenase phqC. Finally, the remaining members of the paraherquamide cluster, including phqI as well as phqM (or phqH), do not have a clearly prescribed role and appear to be redundant. The sequence is that of Prenyltransferase phqA from Penicillium fellutanum.